The sequence spans 535 residues: Triacylglyceride transporter MHAS_02168/C731_2106 (535 aa).

Residues 1–18 (MAFPQTPNRLIRPRRTSR) lie on the Cytoplasmic side of the membrane. Residues 19 to 39 (GIAISAGGLAVLLGALDTYVV) traverse the membrane as a helical segment. Topologically, residues 40–60 (VSIVTDIMRDVGIAVNQIQRV) are periplasmic. A helical membrane pass occupies residues 61 to 82 (TPIITGYLLGYIAAMPLLGRAS). The Cytoplasmic segment spans residues 83-86 (DRFG). A helical transmembrane segment spans residues 87-107 (RKLLIQISLAGFALGSVITAL). At 108–111 (ATNL) the chain is on the periplasmic side. A helical transmembrane segment spans residues 112–136 (DVLVAGRVIQGAASGALLPVTLALA). At 137-145 (ADLWATHKR) the chain is on the cytoplasmic side. Residues 146–167 (AAVLGGVGAAQELGAVLGPIYG) traverse the membrane as a helical segment. The Periplasmic portion of the chain corresponds to 168 to 177 (IFVVWLFHHW). Residues 178 to 198 (QAVFWVNVPLALIAMVLIHIS) form a helical membrane-spanning segment. Topologically, residues 199 to 212 (LPPRVRTEEPQRVD) are cytoplasmic. Residues 213 to 230 (VTGGLLLALALGLATIGL) traverse the membrane as a helical segment. The Periplasmic portion of the chain corresponds to 231–243 (YNAEPDGKQVLPE). Residues 244–263 (YGPPLIIGAVIAAVAFLVWE) traverse the membrane as a helical segment. The Cytoplasmic segment spans residues 264-278 (RFARTRLLDPAGVRF). A helical membrane pass occupies residues 279 to 300 (RPFLIALLVSLVTGGALMVTLV). The Periplasmic portion of the chain corresponds to 301–320 (NVELFGQGVLGLDQDEAVFL). 2 helical membrane passes run 321-343 (LARF…TRVG) and 344-364 (DRAV…LIAQ). The Periplasmic segment spans residues 365 to 384 (WPADVLESRHDLGFVSLPTL). The interval 373–382 (RHDLGFVSLP) is beta-hairpin. Residues 385–407 (DTDLAIAGFGLGLVIAPLTSAAL) form a helical membrane-spanning segment. At 408 to 415 (RVVPAAQH) the chain is on the cytoplasmic side. Residues 416–440 (GIASAAVVVARMIGMLIGIAALSAW) traverse the membrane as a helical segment. Residues 441-487 (GLYRFNQYLKEQLAALPPAPADFPGGQMAGQMMRLRTATVQAYVLQY) are Periplasmic-facing. The helical transmembrane segment at 488-507 (GEIFAITAGLCVFGAVLGLF) threads the bilayer. Residues 508–535 (IAGRREHAEESADAVDGVSNARDRAPSA) lie on the Cytoplasmic side of the membrane.

Belongs to the major facilitator superfamily. P55 (TC 2.A.1.3.34) family.

The protein localises to the cell inner membrane. Functionally, in association with lipoprotein LprG transports triacylglycerides (TAG) across the inner cell membrane, probably transfering them to lipoprotein LprG in the periplasm. TAG probably regulates lipid metabolism and growth regulation and plays a structural role in the outer membrane. Mutagenesis and molecular modeling suggests TAG (and maybe other lipids) enters the central cavity of the P55 transporter from within the cell inner membrane via clefts on the cytoplasmic face of P55 between TM5-TM8 and TM2-TM11. From there the lipid is probably transferred to the hydrophobic cavity of LprG. The lprG-MHAS_02167/C731_2107 operon complements the vancomycin sensitivity of an M.smegmatis knockout of the same operon. Probably required with LprG for normal surface localization of lipoarabinomannan (LAM). The sequence is that of Triacylglyceride transporter MHAS_02168/C731_2106 from Mycolicibacterium hassiacum (strain DSM 44199 / CIP 105218 / JCM 12690 / 3849) (Mycobacterium hassiacum).